The primary structure comprises 127 residues: Large ribosomal subunit protein bL17 (127 aa).

This sequence belongs to the bacterial ribosomal protein bL17 family. As to quaternary structure, part of the 50S ribosomal subunit. Contacts protein L32.

This is Large ribosomal subunit protein bL17 from Escherichia fergusonii (strain ATCC 35469 / DSM 13698 / CCUG 18766 / IAM 14443 / JCM 21226 / LMG 7866 / NBRC 102419 / NCTC 12128 / CDC 0568-73).